Reading from the N-terminus, the 624-residue chain is Ubiquilin-2 (624 aa).

2 disordered regions span residues 1–32 and 106–141; these read MAEN…EPKI and NRPQ…TNSN. Ala2 carries the N-acetylalanine modification. A compositionally biased stretch (low complexity) spans 15–32; sequence RGPAAAQGSAAAPAEPKI. The region spanning 33-107 is the Ubiquitin-like domain; sequence IKVTVKTPKE…VHLVIKSQNR (75 aa). A compositionally biased stretch (polar residues) spans 106–115; the sequence is NRPQGQSTQP. Residues 116-141 are compositionally biased toward low complexity; that stretch reads SNAAGTNTTSASTPRSNSTPISTNSN. STI1 domains are found at residues 178-206 and 208-247; these read SPEM…QLIM and NPQM…MQEM. The tract at residues 287–349 is disordered; it reads FGGNPFASVG…SGSGNSSSNA (63 aa). Positions 294-304 are enriched in low complexity; that stretch reads SVGSSSSSGEG. Pro residues predominate over residues 316-325; the sequence is LPNPWAPPPA. Positions 326-349 are enriched in low complexity; it reads TQSSATTSTTTSTGSGSGNSSSNA. 2 STI1 domains span residues 379–426 and 430–462; these read NPQL…QEQM and LPAF…QQGL. 12 consecutive repeat copies span residues 491–493, 494–496, 497–499, 500–502, 503–505, 506–508, 509–511, 512–514, 515–517, 518–520, 521–523, and 524–526. Residues 491-526 are 12 X 3 AA tandem repeats of P-X-X; that stretch reads PVGPVTPIGPIGPIVPFTPIGPIGPIGPTGPAAPPG. Positions 512 to 556 are disordered; that stretch reads PIGPIGPTGPAAPPGSTGSGGPTGPTVSSAAPSETTSPTSESGPN. Residues 535-553 show a composition bias toward low complexity; that stretch reads GPTVSSAAPSETTSPTSES. One can recognise a UBA domain in the interval 581–621; that stretch reads RFQQQLEQLNAMGFLNREANLQALIATGGDINAAIERLLGS.

As to quaternary structure, homodimer. Forms heterodimer with UBQLN1. Binds UBE3A and BTRC. Interacts with the 19S proteasome subunit. Interacts with C9orf72. Interacts with HNRNPA1 and HNRNPU. Found in a complex with UBQLN1 and MAP1LC3A/B/C. Interacts with EPS15, EPN1 and EPN2. Interacts with HERPUD1. Interacts with RAD23A. Interacts with TARDBP. Interacts (via C-terminus) with FAF2 (via N-terminus). Interacts with UBQLN4. Binds CD47. Post-translationally, degraded during macroautophagy.

It localises to the cytoplasm. Its subcellular location is the nucleus. The protein resides in the membrane. It is found in the cytoplasmic vesicle. The protein localises to the autophagosome. Functionally, plays an important role in the regulation of different protein degradation mechanisms and pathways including ubiquitin-proteasome system (UPS), autophagy and the endoplasmic reticulum-associated protein degradation (ERAD) pathway. Mediates the proteasomal targeting of misfolded or accumulated proteins for degradation by binding (via UBA domain) to their polyubiquitin chains and by interacting (via ubiquitin-like domain) with the subunits of the proteasome. Plays a role in the ERAD pathway via its interaction with ER-localized proteins FAF2/UBXD8 and HERPUD1 and may form a link between the polyubiquitinated ERAD substrates and the proteasome. Involved in the regulation of macroautophagy and autophagosome formation; required for maturation of autophagy-related protein LC3 from the cytosolic form LC3-I to the membrane-bound form LC3-II and may assist in the maturation of autophagosomes to autolysosomes by mediating autophagosome-lysosome fusion. Negatively regulates the endocytosis of GPCR receptors: AVPR2 and ADRB2, by specifically reducing the rate at which receptor-arrestin complexes concentrate in clathrin-coated pits (CCPs). In Homo sapiens (Human), this protein is Ubiquilin-2 (UBQLN2).